Reading from the N-terminus, the 198-residue chain is Recombination protein RecR (198 aa).

Residues C57–C72 form a C4-type zinc finger. In terms of domain architecture, Toprim spans S80–P175.

The protein belongs to the RecR family.

Its function is as follows. May play a role in DNA repair. It seems to be involved in an RecBC-independent recombinational process of DNA repair. It may act with RecF and RecO. The sequence is that of Recombination protein RecR from Bacillus mycoides (strain KBAB4) (Bacillus weihenstephanensis).